We begin with the raw amino-acid sequence, 617 residues long: Threonine--tRNA ligase (617 aa).

The catalytic stretch occupies residues 209-502 (DHRRLGKDLD…MTENYAGDFP (294 aa)). Cys302, His353, and His479 together coordinate Zn(2+).

Belongs to the class-II aminoacyl-tRNA synthetase family. In terms of assembly, homodimer. It depends on Zn(2+) as a cofactor.

It is found in the cytoplasm. It carries out the reaction tRNA(Thr) + L-threonine + ATP = L-threonyl-tRNA(Thr) + AMP + diphosphate + H(+). Its function is as follows. Catalyzes the attachment of threonine to tRNA(Thr) in a two-step reaction: L-threonine is first activated by ATP to form Thr-AMP and then transferred to the acceptor end of tRNA(Thr). Also edits incorrectly charged L-seryl-tRNA(Thr). The chain is Threonine--tRNA ligase from Synechococcus sp. (strain CC9311).